Here is a 76-residue protein sequence, read N- to C-terminus: Small ribosomal subunit protein bS21A (76 aa).

Basic and acidic residues predominate over residues 35-52 (HYEKPSEKRAREKAEAVR). The disordered stretch occupies residues 35–76 (HYEKPSEKRAREKAEAVRRARKLARKRAQREGLVSGRPAAAR). Over residues 53–62 (RARKLARKRA) the composition is skewed to basic residues.

This sequence belongs to the bacterial ribosomal protein bS21 family.

This is Small ribosomal subunit protein bS21A from Chelativorans sp. (strain BNC1).